The chain runs to 178 residues: Alkyl hydroperoxide reductase AhpD (178 aa).

Cys-130 acts as the Proton donor in catalysis. Cys-130 and Cys-133 are disulfide-bonded. Cys-133 serves as the catalytic Cysteine sulfenic acid (-SOH) intermediate.

The protein belongs to the AhpD family. In terms of assembly, homotrimer.

It carries out the reaction N(6)-[(R)-dihydrolipoyl]-L-lysyl-[lipoyl-carrier protein] + a hydroperoxide = N(6)-[(R)-lipoyl]-L-lysyl-[lipoyl-carrier protein] + an alcohol + H2O. In terms of biological role, antioxidant protein with alkyl hydroperoxidase activity. Required for the reduction of the AhpC active site cysteine residues and for the regeneration of the AhpC enzyme activity. The protein is Alkyl hydroperoxide reductase AhpD of Mycobacterium marinum (strain ATCC BAA-535 / M).